The sequence spans 427 residues: Histidinol dehydrogenase (427 aa).

NAD(+) is bound by residues Tyr127, Gln187, and Asn210. Positions 233, 255, and 258 each coordinate substrate. Gln255 and His258 together coordinate Zn(2+). Residues Glu323 and His324 each act as proton acceptor in the active site. Substrate contacts are provided by His324, Asp357, Glu411, and His416. Zn(2+) is bound at residue Asp357. A Zn(2+)-binding site is contributed by His416.

Belongs to the histidinol dehydrogenase family. Zn(2+) serves as cofactor.

The catalysed reaction is L-histidinol + 2 NAD(+) + H2O = L-histidine + 2 NADH + 3 H(+). Its pathway is amino-acid biosynthesis; L-histidine biosynthesis; L-histidine from 5-phospho-alpha-D-ribose 1-diphosphate: step 9/9. In terms of biological role, catalyzes the sequential NAD-dependent oxidations of L-histidinol to L-histidinaldehyde and then to L-histidine. The chain is Histidinol dehydrogenase from Streptococcus mutans serotype c (strain ATCC 700610 / UA159).